A 455-amino-acid polypeptide reads, in one-letter code: Tubulin delta chain (455 aa).

143–149 contributes to the GTP binding site; the sequence is AGGTGSG.

Belongs to the tubulin family. Found in a complex with TEDC1, TEDC2, TUBE1 and TUBD1. Highly expressed in testis.

The protein localises to the cell projection. Its subcellular location is the cilium. The protein resides in the cytoplasm. It localises to the cytoskeleton. It is found in the microtubule organizing center. The protein localises to the centrosome. Its subcellular location is the centriole. The protein resides in the nucleus. Its function is as follows. Acts as a positive regulator of hedgehog signaling and regulates ciliary function. The polypeptide is Tubulin delta chain (Tubd1) (Mus musculus (Mouse)).